Here is a 379-residue protein sequence, read N- to C-terminus: Cytochrome b (379 aa).

4 helical membrane passes run 33 to 53 (FGSL…FLAM), 77 to 98 (WLIR…FIHV), 113 to 133 (WNIG…GYVL), and 178 to 198 (FFAF…VHLL). Residues His-83 and His-97 each contribute to the heme b site. Heme b contacts are provided by His-182 and His-196. His-201 provides a ligand contact to a ubiquinone. The next 4 membrane-spanning stretches (helical) occupy residues 226–246 (TKDL…ALFF), 288–308 (LGGV…PLLN), 320–340 (VTQV…WIGG), and 347–367 (FTMI…ILMP).

This sequence belongs to the cytochrome b family. In terms of assembly, the cytochrome bc1 complex contains 11 subunits: 3 respiratory subunits (MT-CYB, CYC1 and UQCRFS1), 2 core proteins (UQCRC1 and UQCRC2) and 6 low-molecular weight proteins (UQCRH/QCR6, UQCRB/QCR7, UQCRQ/QCR8, UQCR10/QCR9, UQCR11/QCR10 and a cleavage product of UQCRFS1). This cytochrome bc1 complex then forms a dimer. Heme b is required as a cofactor.

The protein resides in the mitochondrion inner membrane. Its function is as follows. Component of the ubiquinol-cytochrome c reductase complex (complex III or cytochrome b-c1 complex) that is part of the mitochondrial respiratory chain. The b-c1 complex mediates electron transfer from ubiquinol to cytochrome c. Contributes to the generation of a proton gradient across the mitochondrial membrane that is then used for ATP synthesis. This is Cytochrome b (MT-CYB) from Akodon kofordi (Koford's grass mouse).